The chain runs to 403 residues: Malate dehydrogenase, chloroplastic (403 aa).

A chloroplast-targeting transit peptide spans 1 to 80 (MATATSASLF…DKKPYGFKIN (80 aa)). Residues 89 to 95 (GAAGGIG) and aspartate 115 each bind NAD(+). 2 residues coordinate substrate: arginine 162 and arginine 168. Residues asparagine 175 and 198–200 (ISN) contribute to the NAD(+) site. Positions 200 and 234 each coordinate substrate. Histidine 258 functions as the Proton acceptor in the catalytic mechanism. Methionine 309 provides a ligand contact to NAD(+).

This sequence belongs to the LDH/MDH superfamily. MDH type 1 family. Homodimer. In terms of tissue distribution, expressed in rosette leaves. Expressed in meristematic regions of roots and shoots, cotyledons, young leaves, trichomes, stamen, pollen, tapetum, gynoecium and ovules.

Its subcellular location is the plastid. The protein localises to the chloroplast stroma. The catalysed reaction is (S)-malate + NAD(+) = oxaloacetate + NADH + H(+). Catalyzes a reversible NAD-dependent dehydrogenase reaction involved in central metabolism and redox homeostasis between organelle compartments. Plays a key role in the metabolism of dark chloroplasts and non-green plastids. Essential for embryo viability. Plays an essential role in heterotrophic metabolism in embryos, and autotrophic metabolism in photosynthetic tissues as well. This is Malate dehydrogenase, chloroplastic from Arabidopsis thaliana (Mouse-ear cress).